The following is a 179-amino-acid chain: Small ribosomal subunit protein uS7 (179 aa).

Belongs to the universal ribosomal protein uS7 family. In terms of assembly, part of the 30S ribosomal subunit. Contacts proteins S9 and S11. Cross-links to IF3 and the P and E site tRNAs.

Functionally, one of the primary rRNA binding proteins, it binds directly to 16S rRNA where it nucleates assembly of the head domain of the 30S subunit. Is located at the subunit interface close to the decoding center, where it has been shown to contact mRNA. Has been shown to contact tRNA in both the P and E sites; it probably blocks exit of the E site tRNA. In terms of biological role, protein S7 is also a translational repressor protein; it regulates the expression of the str operon members to different degrees by binding to its mRNA. This is Small ribosomal subunit protein uS7 (rpsG) from Escherichia coli (strain K12).